Consider the following 79-residue polypeptide: D-alanyl carrier protein (79 aa).

Residues 1 to 77 enclose the Carrier domain; it reads MDTKQGVLDI…KIVAKVESLE (77 aa). Ser-35 is subject to O-(pantetheine 4'-phosphoryl)serine.

This sequence belongs to the DltC family. In terms of processing, 4'-phosphopantetheine is transferred from CoA to a specific serine of apo-DCP.

The protein localises to the cytoplasm. It functions in the pathway cell wall biogenesis; lipoteichoic acid biosynthesis. In terms of biological role, carrier protein involved in the D-alanylation of lipoteichoic acid (LTA). The loading of thioester-linked D-alanine onto DltC is catalyzed by D-alanine--D-alanyl carrier protein ligase DltA. The DltC-carried D-alanyl group is further transferred to cell membrane phosphatidylglycerol (PG) by forming an ester bond, probably catalyzed by DltD. D-alanylation of LTA plays an important role in modulating the properties of the cell wall in Gram-positive bacteria, influencing the net charge of the cell wall. This Lactobacillus helveticus (strain DPC 4571) protein is D-alanyl carrier protein.